The primary structure comprises 312 residues: Protoheme IX farnesyltransferase (312 aa).

8 helical membrane passes run 31–51 (VMSL…GSFH), 52–72 (PVLA…AGAL), 119–139 (ILVN…YVVI), 152–172 (IVIG…SVTG), 179–199 (ILLF…LALF), 225–245 (ILLY…LGYF), 247–267 (VIYG…AVRV), and 288–308 (ILYL…AAVL).

Belongs to the UbiA prenyltransferase family. Protoheme IX farnesyltransferase subfamily.

The protein localises to the cell inner membrane. The catalysed reaction is heme b + (2E,6E)-farnesyl diphosphate + H2O = Fe(II)-heme o + diphosphate. It functions in the pathway porphyrin-containing compound metabolism; heme O biosynthesis; heme O from protoheme: step 1/1. In terms of biological role, converts heme B (protoheme IX) to heme O by substitution of the vinyl group on carbon 2 of heme B porphyrin ring with a hydroxyethyl farnesyl side group. The protein is Protoheme IX farnesyltransferase of Rhodopseudomonas palustris (strain ATCC BAA-98 / CGA009).